Reading from the N-terminus, the 972-residue chain is Structural polyprotein (972 aa).

Asp-26 contributes to the a divalent metal cation binding site. One can recognise a Peptidase S50 domain in the interval 509 to 734 (SGGPDGKFSR…YLGELMASNA (226 aa)). Ser-633 acts as the Nucleophile in catalysis. The active site involves Lys-674. Disordered stretches follow at residues 794–817 (KLISTPPKHPEKPKGPDQHHAQEA) and 916–972 (NGGR…NAEV). A compositionally biased stretch (basic and acidic residues) spans 801–817 (KHPEKPKGPDQHHAQEA). The segment covering 963 to 972 (FTPSGDNAEV) has biased composition (polar residues).

As to quaternary structure, homotrimer. A central divalent metal (possibly cobalt) stabilizes the VP2 trimer. In terms of assembly, homodimer. interacts (via C-terminus) with VP1 in the cytoplasm. Interacts with VP2. Specific enzymatic cleavages yield mature proteins. The capsid assembly seems to be regulated by polyprotein processing. The protease VP4 cleaves itself off the polyprotein, thus releasing pre-VP2 and VP3 within the infected cell. During capsid assembly, the C-terminus of pre-VP2 is further processed by VP4, giving rise to VP2, the external capsid protein and three small peptides that all stay closely associated with the capsid.

It is found in the virion. The protein localises to the host cytoplasm. Functionally, capsid protein VP2 self assembles to form an icosahedral capsid with a T=13 symmetry, about 70 nm in diameter, and consisting of 260 VP2 trimers. The capsid encapsulates the genomic dsRNA. VP2 is also involved in attachment and entry into the host cell. In terms of biological role, the precursor of VP2 plays an important role in capsid assembly. First, pre-VP2 and VP2 oligomers assemble to form a procapsid. Then, the pre-VP2 intermediates may be processed into VP2 proteins by proteolytic cleavage mediated by VP4 to obtain the mature virion. The final capsid is composed of pentamers and hexamers but VP2 has a natural tendency to assemble into all-pentameric structures. Therefore pre-VP2 may be required to allow formation of the hexameric structures. Its function is as follows. Protease VP4 is a serine protease that cleaves the polyprotein into its final products. Pre-VP2 is first partially cleaved, and may be completely processed by VP4 upon capsid maturation. Capsid protein VP3 plays a key role in virion assembly by providing a scaffold for the capsid made of VP2. May self-assemble to form a T=4-like icosahedral inner-capsid composed of at least 180 trimers. Plays a role in genomic RNA packaging by recruiting VP1 into the capsid and interacting with the dsRNA genome segments to form a ribonucleoprotein complex. Additionally, the interaction of the VP3 C-terminal tail with VP1 removes the inherent structural blockade of the polymerase active site. Thus, VP3 can also function as a transcriptional activator. Functionally, structural peptide 1 is a small peptide derived from pre-VP2 C-terminus. It destabilizes and perforates cell membranes, suggesting a role during entry. In terms of biological role, structural peptide 2 is a small peptide derived from pVP2 C-terminus. It is not essential for the virus viability, but viral growth is affected when missing. Its function is as follows. Structural peptide 3 is a small peptide derived from pVP2 C-terminus. It is not essential for the virus viability, but viral growth is affected when missing. This is Structural polyprotein from Infectious pancreatic necrosis virus (strain Sp) (IPNV).